Consider the following 347-residue polypeptide: S-adenosylmethionine:tRNA ribosyltransferase-isomerase (347 aa).

Belongs to the QueA family. In terms of assembly, monomer.

Its subcellular location is the cytoplasm. It carries out the reaction 7-aminomethyl-7-carbaguanosine(34) in tRNA + S-adenosyl-L-methionine = epoxyqueuosine(34) in tRNA + adenine + L-methionine + 2 H(+). The protein operates within tRNA modification; tRNA-queuosine biosynthesis. Its function is as follows. Transfers and isomerizes the ribose moiety from AdoMet to the 7-aminomethyl group of 7-deazaguanine (preQ1-tRNA) to give epoxyqueuosine (oQ-tRNA). The protein is S-adenosylmethionine:tRNA ribosyltransferase-isomerase of Exiguobacterium sibiricum (strain DSM 17290 / CCUG 55495 / CIP 109462 / JCM 13490 / 255-15).